A 280-amino-acid chain; its full sequence is Energy-coupling factor transporter ATP-binding protein EcfA2 (280 aa).

The ABC transporter domain occupies 3 to 245 (INLQNVSYTY…VSLLEKKQLG (243 aa)). 40 to 47 (GHTGSGKS) provides a ligand contact to ATP.

This sequence belongs to the ABC transporter superfamily. Energy-coupling factor EcfA family. As to quaternary structure, forms a stable energy-coupling factor (ECF) transporter complex composed of 2 membrane-embedded substrate-binding proteins (S component), 2 ATP-binding proteins (A component) and 2 transmembrane proteins (T component).

It is found in the cell membrane. In terms of biological role, ATP-binding (A) component of a common energy-coupling factor (ECF) ABC-transporter complex. Unlike classic ABC transporters this ECF transporter provides the energy necessary to transport a number of different substrates. The chain is Energy-coupling factor transporter ATP-binding protein EcfA2 from Streptococcus pyogenes serotype M3 (strain ATCC BAA-595 / MGAS315).